A 390-amino-acid chain; its full sequence is Transforming growth factor beta-1 proprotein (390 aa).

The N-terminal stretch at 1 to 29 is a signal peptide; the sequence is MPPSGLRLLPLLLPLLRLLVLTPGRPAAG. The straightjacket domain stretch occupies residues 30-74; the sequence is LSTCKTIDMELVKRKRIEAIRGQILSKLRLSSPPSQGEVPPVPLP. An arm domain region spans residues 75–271; that stretch reads EAVLALYNST…ATPLERAQHL (197 aa). N-linked (GlcNAc...) asparagine glycosylation is found at asparagine 82, asparagine 136, and asparagine 176. The interval 226-252 is bowtie tail; that stretch reads DSKDNTLQVDINGFSSSRRGDLATIHG. The Cell attachment site motif lies at 244–246; sequence RGD. Intrachain disulfides connect cysteine 285–cysteine 294, cysteine 293–cysteine 356, cysteine 322–cysteine 387, and cysteine 326–cysteine 389.

The protein belongs to the TGF-beta family. As to quaternary structure, homodimer; disulfide-linked. Interacts with the serine proteases, HTRA1 and HTRA3: the interaction with either inhibits TGFB1-mediated signaling and the HTRA protease activity is required for this inhibition. May interact with THSD4; this interaction may lead to sequestration by FBN1 microfibril assembly and attenuation of TGFB signaling. Interacts with CD109, DPT and ASPN. Interacts with EFEMP2. Interacts with TSKU; the interaction contributes to regulation of the hair cycle. Interacts with TGFBR3. Homodimer; disulfide-linked. Interacts with transforming growth factor beta-1 (TGF-beta-1) chain; interaction is non-covalent and maintains TGF-beta-1 in a latent state; each latency-associated peptide (LAP) monomer interacts with TGF-beta-1 in the other monomer. Interacts with LTBP1; leading to regulation of TGF-beta-1 activation. Interacts with LRRC32/GARP; leading to regulation of TGF-beta-1 activation on the surface of activated regulatory T-cells (Tregs). Interacts with LRRC33/NRROS; leading to regulation of TGF-beta-1 activation in macrophages and microglia. Interacts (via cell attachment site) with integrins ITGAV and ITGB6 (ITGAV:ITGB6), leading to release of the active TGF-beta-1. Interacts with NREP; the interaction results in a decrease in TGFB1 autoinduction. Interacts with HSP90AB1; inhibits latent TGFB1 activation. In terms of assembly, homodimer; disulfide-linked. Interacts with TGF-beta receptors (TGFBR1 and TGFBR2), leading to signal transduction. Transforming growth factor beta-1 proprotein: The precursor proprotein is cleaved in the Golgi apparatus by FURIN to form Transforming growth factor beta-1 (TGF-beta-1) and Latency-associated peptide (LAP) chains, which remain non-covalently linked, rendering TGF-beta-1 inactive. In terms of processing, N-glycosylated. Deglycosylation leads to activation of Transforming growth factor beta-1 (TGF-beta-1); mechanisms triggering deglycosylation-driven activation of TGF-beta-1 are however unclear.

The protein resides in the secreted. It is found in the extracellular space. Its subcellular location is the extracellular matrix. Transforming growth factor beta-1 proprotein: Precursor of the Latency-associated peptide (LAP) and Transforming growth factor beta-1 (TGF-beta-1) chains, which constitute the regulatory and active subunit of TGF-beta-1, respectively. Its function is as follows. Required to maintain the Transforming growth factor beta-1 (TGF-beta-1) chain in a latent state during storage in extracellular matrix. Associates non-covalently with TGF-beta-1 and regulates its activation via interaction with 'milieu molecules', such as LTBP1, LRRC32/GARP and LRRC33/NRROS, that control activation of TGF-beta-1. Interaction with LRRC33/NRROS regulates activation of TGF-beta-1 in macrophages and microglia. Interaction with LRRC32/GARP controls activation of TGF-beta-1 on the surface of activated regulatory T-cells (Tregs). Interaction with integrins (ITGAV:ITGB6 or ITGAV:ITGB8) results in distortion of the Latency-associated peptide chain and subsequent release of the active TGF-beta-1. In terms of biological role, multifunctional protein that regulates the growth and differentiation of various cell types and is involved in various processes, such as normal development, immune function, microglia function and responses to neurodegeneration. Activation into mature form follows different steps: following cleavage of the proprotein in the Golgi apparatus, Latency-associated peptide (LAP) and Transforming growth factor beta-1 (TGF-beta-1) chains remain non-covalently linked rendering TGF-beta-1 inactive during storage in extracellular matrix. At the same time, LAP chain interacts with 'milieu molecules', such as LTBP1, LRRC32/GARP and LRRC33/NRROS that control activation of TGF-beta-1 and maintain it in a latent state during storage in extracellular milieus. TGF-beta-1 is released from LAP by integrins (ITGAV:ITGB6 or ITGAV:ITGB8): integrin-binding to LAP stabilizes an alternative conformation of the LAP bowtie tail and results in distortion of the LAP chain and subsequent release of the active TGF-beta-1. Once activated following release of LAP, TGF-beta-1 acts by binding to TGF-beta receptors (TGFBR1 and TGFBR2), which transduce signal. While expressed by many cells types, TGF-beta-1 only has a very localized range of action within cell environment thanks to fine regulation of its activation by Latency-associated peptide chain (LAP) and 'milieu molecules'. Plays an important role in bone remodeling: acts as a potent stimulator of osteoblastic bone formation, causing chemotaxis, proliferation and differentiation in committed osteoblasts. Can promote either T-helper 17 cells (Th17) or regulatory T-cells (Treg) lineage differentiation in a concentration-dependent manner. At high concentrations, leads to FOXP3-mediated suppression of RORC and down-regulation of IL-17 expression, favoring Treg cell development. At low concentrations in concert with IL-6 and IL-21, leads to expression of the IL-17 and IL-23 receptors, favoring differentiation to Th17 cells. Stimulates sustained production of collagen through the activation of CREB3L1 by regulated intramembrane proteolysis (RIP). Mediates SMAD2/3 activation by inducing its phosphorylation and subsequent translocation to the nucleus. Positively regulates odontoblastic differentiation in dental papilla cells, via promotion of IPO7-mediated translocation of phosphorylated SMAD2 to the nucleus and subsequent transcription of target genes. Can induce epithelial-to-mesenchymal transition (EMT) and cell migration in various cell types. The sequence is that of Transforming growth factor beta-1 proprotein (TGFB1) from Canis lupus familiaris (Dog).